The sequence spans 382 residues: Queuine tRNA-ribosyltransferase (382 aa).

The Proton acceptor role is filled by D93. Residues 93-97 (DSGGF), D147, Q191, and G218 each bind substrate. Residues 249–255 (GVGKPED) are RNA binding. D268 acts as the Nucleophile in catalysis. The tract at residues 273–277 (TRNAR) is RNA binding; important for wobble base 34 recognition. Residues C306, C308, C311, and H337 each contribute to the Zn(2+) site.

The protein belongs to the queuine tRNA-ribosyltransferase family. In terms of assembly, homodimer. Within each dimer, one monomer is responsible for RNA recognition and catalysis, while the other monomer binds to the replacement base PreQ1. It depends on Zn(2+) as a cofactor.

It catalyses the reaction 7-aminomethyl-7-carbaguanine + guanosine(34) in tRNA = 7-aminomethyl-7-carbaguanosine(34) in tRNA + guanine. Its pathway is tRNA modification; tRNA-queuosine biosynthesis. Functionally, catalyzes the base-exchange of a guanine (G) residue with the queuine precursor 7-aminomethyl-7-deazaguanine (PreQ1) at position 34 (anticodon wobble position) in tRNAs with GU(N) anticodons (tRNA-Asp, -Asn, -His and -Tyr). Catalysis occurs through a double-displacement mechanism. The nucleophile active site attacks the C1' of nucleotide 34 to detach the guanine base from the RNA, forming a covalent enzyme-RNA intermediate. The proton acceptor active site deprotonates the incoming PreQ1, allowing a nucleophilic attack on the C1' of the ribose to form the product. After dissociation, two additional enzymatic reactions on the tRNA convert PreQ1 to queuine (Q), resulting in the hypermodified nucleoside queuosine (7-(((4,5-cis-dihydroxy-2-cyclopenten-1-yl)amino)methyl)-7-deazaguanosine). This Actinobacillus pleuropneumoniae serotype 3 (strain JL03) protein is Queuine tRNA-ribosyltransferase.